Here is a 140-residue protein sequence, read N- to C-terminus: Early nodulin-like protein 22 (140 aa).

The signal sequence occupies residues methionine 1–leucine 28. The Phytocyanin domain occupies threonine 39–alanine 138. An N-linked (GlcNAc...) asparagine glycan is attached at asparagine 85. Cysteine 92 and cysteine 126 form a disulfide bridge.

The protein belongs to the early nodulin-like (ENODL) family.

In terms of biological role, may act as a carbohydrate transporter. This chain is Early nodulin-like protein 22, found in Arabidopsis thaliana (Mouse-ear cress).